We begin with the raw amino-acid sequence, 216 residues long: Fibroblast growth factor 19 (216 aa).

Residues 1-24 (MRSGCVVVHVWILAGLWLAVAGRP) form the signal peptide. 2 cysteine pairs are disulfide-bonded: Cys-58–Cys-70 and Cys-102–Cys-120.

The protein belongs to the heparin-binding growth factors family. As to quaternary structure, interacts with FGFR1, FGFR2, FGFR3 and FGFR4. Affinity between fibroblast growth factors (FGFs) and their receptors is increased by KL, KLB and heparan sulfate glycosaminoglycans that function as coreceptors. Interacts with KL; this interaction is direct. Interacts with KLB; this interaction is direct. Interacts with FGFR4 in the presence of heparin, KL or KLB. Interacts with MALRD1. As to expression, expressed in fetal brain, cartilage, retina, and adult gall bladder.

The protein resides in the secreted. Its function is as follows. Involved in the suppression of bile acid biosynthesis through down-regulation of CYP7A1 expression, following positive regulation of the JNK and ERK1/2 cascades. Stimulates glucose uptake in adipocytes. Activity requires the presence of KLB and FGFR4. The chain is Fibroblast growth factor 19 (FGF19) from Homo sapiens (Human).